Consider the following 440-residue polypeptide: 5-hydroxytryptamine receptor 6 (440 aa).

Residues 1–27 (MVPEPGPTANSTPAWGAGPPSAPGGSG) lie on the Extracellular side of the membrane. Residues 28–52 (WVAAALCVVIALTAAANSLLIALIC) form a helical membrane-spanning segment. Residues 53–62 (TQPALRNTSN) are Cytoplasmic-facing. A helical membrane pass occupies residues 63-88 (FFLVSLFTSDLMVGLVVMPPAMLNAL). The Extracellular portion of the chain corresponds to 89–96 (YGRWVLAR). Residues 97–122 (GLCLLWTAFDVMCCSASILNLCLISL) form a helical membrane-spanning segment. A disulfide bridge links cysteine 99 with cysteine 180. Aspartate 106 is a serotonin binding site. Over 123–142 (DRYLLILSPLRYKLRMTPLR) the chain is Cytoplasmic. The chain crosses the membrane as a helical span at residues 143–167 (ALALVLGAWSLAALASFLPLLLGWH). At 168-185 (ELGHARPPVPGQCRLLAS) the chain is on the extracellular side. A helical transmembrane segment spans residues 186 to 209 (LPFVLVASGLTFFLPSGAICFTYC). Topologically, residues 210 to 266 (RILLAARKQAVQVASLTTGMASQASETLQVPRTPRPGVESADSRRLATKHSRKALKA) are cytoplasmic. Residues 267–293 (SLTLGILLGMFFVTWLPFFVANIVQAV) form a helical membrane-spanning segment. Asparagine 288 contacts serotonin. Topologically, residues 294–299 (CDCISP) are extracellular. The chain crosses the membrane as a helical span at residues 300–323 (GLFDVLTWLGYCNSTMNPIIYPLF). At 324 to 440 (MRDFKRALGR…RPHPLGIPTN (117 aa)) the chain is on the cytoplasmic side. The tract at residues 346–392 (ASLASPSLRTSHSGPRPGLSLQQVLPLPLPPDSDSDSDAGSGGSSGL) is disordered. Over residues 347–358 (SLASPSLRTSHS) the composition is skewed to polar residues. Residues 362 to 371 (PGLSLQQVLP) show a composition bias toward low complexity.

This sequence belongs to the G-protein coupled receptor 1 family. As to quaternary structure, interacts with MTOR, RPTOR and NF1. Interacts with CDK5. In terms of tissue distribution, expressed in several human brain regions, most prominently in the caudate nucleus.

It localises to the cell membrane. Its function is as follows. G-protein coupled receptor for 5-hydroxytryptamine (serotonin), a biogenic hormone that functions as a neurotransmitter, a hormone and a mitogen. Also has a high affinity for tricyclic psychotropic drugs. Ligand binding causes a conformation change that triggers signaling via guanine nucleotide-binding proteins (G proteins) and modulates the activity of downstream effectors. HTR6 is coupled to G(s) G alpha proteins and mediates activation of adenylate cyclase activity. Controls pyramidal neurons migration during corticogenesis, through the regulation of CDK5 activity. Is an activator of mTOR signaling. This Homo sapiens (Human) protein is 5-hydroxytryptamine receptor 6.